Reading from the N-terminus, the 190-residue chain is Segregation and condensation protein B (190 aa).

Belongs to the ScpB family. As to quaternary structure, homodimer. Homodimerization may be required to stabilize the binding of ScpA to the Smc head domains. Component of a cohesin-like complex composed of ScpA, ScpB and the Smc homodimer, in which ScpA and ScpB bind to the head domain of Smc. The presence of the three proteins is required for the association of the complex with DNA.

It localises to the cytoplasm. Functionally, participates in chromosomal partition during cell division. May act via the formation of a condensin-like complex containing Smc and ScpA that pull DNA away from mid-cell into both cell halves. The polypeptide is Segregation and condensation protein B (Ruminiclostridium cellulolyticum (strain ATCC 35319 / DSM 5812 / JCM 6584 / H10) (Clostridium cellulolyticum)).